Reading from the N-terminus, the 1902-residue chain is MLTDFLQAPVMAPWSPFSLHLLLLFLPLLPLTRVHRFSVPNTSFNHLVLAPDQGKLYVGAVNHLFQLSPELKMESVAVTGPVIDSPDCVPFRDLAECPQAQLTDNANQLLLVSSRTQELVACGQVKQGVCEKRRLGDVTQVLYQAEDPGDGQFVAANTLGVTTVGLVVPLPGRDLLLVARGLAGKLSAGVPPLTVRQLAGPQPFSSEGLGRLVVGDFSDYNNSYVGAFSDAHSAYFVFRRRGARAQTEYRSYVARVCLRDVNLYSYVEMPLTCHGQGLIQAAFLTPDTLLGAFSAGTSQAQAALCAFPLADLDRSMEQARRLCYTTGGQGPSGMEEATVEYGVTSRCVTLPPDSPESYPCGDEHTPSPIAGRQPLEAQPLLQLGQSISAVAALQTDGHTIAFLGDTQGQLHKVFLNSSHGQVYHSQQVGPPGSAISPDLLVDSNGDHLYVLTAQQVDRILVAACPQFPNCTTCLQARDPLCGWCILQGRCTRRGECGRAAQPNHWLWSYEDNHCPYIQSLLPAQHPRQEQGQIILSVPRLPTLAMDEYFHCAFGGYNSLAQVEEPHVVCTTPPQDQMPPNPPGSDHVTLPLALMFEDVVLTATTFSFYDCSAVQALEVAAPCRACVSSLWRCHWCPQSSHCIYGEHCPEGEKAVYSAQEVDILVRGPEACPQVEGLASPQLVPVGWESHVTLHIQNLHYFQGLPALYHCWLELPGKLQKLPASLEETSRDSGLIHCQAQQFYPSMSQWELPVPIYVTRGEIQRLDNAGDLHVTLYDCAMGHPDCSHCQAANGSLSCLWCGDGQPACRYGPLCPPGAVEQLCPIPSIDVIEPLTGPPEGGLAITILGSNLGQAFNDVRNAVTVAGQPCNPDPSLYRISARIVCVTSPAPNGTAGPVQVAIKSRPPGISTQNFTYQDPVLLSLNPQWGPQAGGTQLTIHGQYLQTGGNISVFVGDQPCPIQEPVCPEAIICHTMPQTEPGEAVVLIVFGHVERKLLTTPFRYTANPQLVEAEPSVSFRGGGRVIRVRGTGLDVVWQPLLSVWLEDEPKVKALGVQAQDANPRRSCGAPAADPQACIHLESGLLQCSTLCSVNSSSLLLCHSPAVPDGALPKRVFFALDNMQVDFASASGGQGFLYQPNPRLAPLSHEGITHPYHLKPGHVLDVEGEGLNLGISKEEVQVHIGDGECLVKTLTLTHLYCEPPPQAPQPTNGSGTLPQFVVQMGNLRLALGPVQYEAESMMSTFPVEAQLGLGMGAAVLIAAVLLLTLMYRHKSKKALRDYQKVLVQLENLETGVGDQCRKEFTDLMTEMTDLTSDLEASGIPFLDYRTYAERAFFPGHVGCPLQPGLEGLGEEGRSVTVRQGLTQLSNLLNSKLFLLTLIHTLEEQPSFSQRDRCHVASLLSLALHSKLEYLTDIMRTLLGDLAAHYVHKNPKLMLRRTETMVEKLLTNWLSICLYTFLKEVAGEPLYMLFRAIKYQVDKGPVDAVTGKAKRTLNDSHLLREDVEFQPLTLMALVGPEADRAAGNSGVHRVPARVLDTDTITQVKEKVLDQIYKGTPFSQRPSVHSLDLEWRSGLAGHLTLSDEDLTSVTQNHWKRLNTLQHYKVPDGATVVLIPQVHNGGTVSQSLGQTGCPSGENTPMLEDGEEGGVRLWHLVKATEEAEGAKVRRSSLRDRERERSRAKAIPEIYLTRLLSMKGTLQKFVDDTFQAILSMNRPVPIAVKYLFDFLDELAEKHGIEDPETLHIWKTNSLLLRFWVNVLKNPQLIFDVQVSDNEDAILAVIAQTFIDSCMVSEHKVGRDSPVNKLLYAREIPRYKQMVEKYYADIRQSSPASYQEMNSALAELSGNYSSAPHCLEALRELYNHIHRYYDQIISALEEDPVAQKMQLACRLQQVAALVEYKVTDL.

Residues 1-36 (MLTDFLQAPVMAPWSPFSLHLLLLFLPLLPLTRVHR) form the signal peptide. Residues 37–461 (FSVPNTSFNH…TAQQVDRILV (425 aa)) enclose the Sema domain. The Extracellular segment spans residues 37 to 1245 (FSVPNTSFNH…MMSTFPVEAQ (1209 aa)). An N-linked (GlcNAc...) asparagine glycan is attached at Asn41. Disulfide bonds link Cys88–Cys97 and Cys122–Cys130. N-linked (GlcNAc...) asparagine glycosylation occurs at Asn221. 3 cysteine pairs are disulfide-bonded: Cys257-Cys360, Cys273-Cys305, and Cys323-Cys347. The segment at 353 to 372 (DSPESYPCGDEHTPSPIAGR) is disordered. N-linked (GlcNAc...) asparagine glycosylation is found at Asn416 and Asn469. The 53-residue stretch at 463-515 (ACPQFPNCTTCLQARDPLCGWCILQGRCTRRGECGRAAQPNHWLWSYEDNHCP) folds into the PSI 1 domain. Intrachain disulfides connect Cys464/Cys481, Cys470/Cys514, Cys473/Cys490, Cys484/Cys496, and Cys551/Cys569. PSI domains are found at residues 609–671 (DCSA…EACP) and 776–822 (DCAM…QLCP). Residues Asn791, Asn889, Asn910, Asn946, Asn1090, and Asn1207 are each glycosylated (N-linked (GlcNAc...) asparagine). 4 consecutive IPT/TIG domains span residues 823–914 (IPSI…FTYQ), 915–1001 (DPVL…FRYT), 1003–1134 (NPQL…FLYQ), and 1154–1221 (KPGH…QMGN). Residues 1246–1266 (LGLGMGAAVLIAAVLLLTLMY) form a helical membrane-spanning segment. The Cytoplasmic segment spans residues 1267–1902 (RHKSKKALRD…ALVEYKVTDL (636 aa)).

The protein belongs to the plexin family. As to quaternary structure, binds MET and MST1R. Interacts with RIT2/RIN. May form homodimers (via Sema domain). Interacts (via cytoplasmic domain) with FSCN1, ARHGDIA and RAC1. Expressed in brain (at protein level). In cerebellum, strongest expression detected in Purkinje and granular cells. Detected at very low levels in several fetal tissues, including dorsal root ganglia (DRG), heart, lung, optic bulb, brain and liver.

The protein resides in the cell membrane. Receptor for SEMA5A that plays a role in axon guidance, invasive growth and cell migration. Stimulates neurite outgrowth and mediates Ca(2+)/Mg(2+)-dependent cell aggregation. In glioma cells, SEMA5A stimulation of PLXNB3 results in the disassembly of F-actin stress fibers, disruption of focal adhesions and cellular collapse as well as inhibition of cell migration and invasion through ARHGDIA-mediated inactivation of RAC1. Seem to be non-essential for normal development and function of the central nervous system. This is Plexin-B3 (Plxnb3) from Mus musculus (Mouse).